The following is a 55-amino-acid chain: Conotoxin Cal22b (55 aa).

Positions 1 to 5 (GRPSA) are excised as a propeptide.

In terms of processing, contains 4 disulfide bonds. In terms of tissue distribution, expressed by the venom duct.

The protein localises to the secreted. In terms of biological role, probable neurotoxin with unknown target. Possibly targets ion channels. This is Conotoxin Cal22b from Californiconus californicus (California cone).